An 832-amino-acid chain; its full sequence is Cytosolic carboxypeptidase-like protein 5 (832 aa).

A disordered region spans residues 27-50 (TVPSDGEGVGGAATAPTSGSASSP). Positions 38–50 (AATAPTSGSASSP) are enriched in low complexity. The region spanning 157–571 (YPFSYSDCQD…ALAIAALDMA (415 aa)) is the Peptidase M14 domain. Residues His252 and Glu255 each coordinate Zn(2+). Residues 343–354 (NSKNPSNQQPSS) are compositionally biased toward low complexity. Disordered stretches follow at residues 343 to 362 (NSKNPSNQQPSSLHLPPEVP) and 376 to 402 (LHLGQSPDGENHDRWTETEPTEEKTDP). Positions 384–401 (GENHDRWTETEPTEEKTD) are enriched in basic and acidic residues. His435 serves as a coordination point for Zn(2+). The active-site Proton donor/acceptor is the Glu517. Residues 606–752 (STANVGLNKK…ASPTSSRNMG (147 aa)) form a disordered region. A compositionally biased stretch (polar residues) spans 621–636 (PPKSNNGLPVSCSENA). Positions 644-654 (STGTSTGGSSS) are enriched in low complexity. Over residues 655-666 (QQNSPQMKNSPS) the composition is skewed to polar residues. Low complexity predominate over residues 708 to 752 (QQQQQQQQQQQQQQQQPLNQRSTTSSLAPSPTLASASPTSSRNMG).

It belongs to the peptidase M14 family. Requires Zn(2+) as cofactor.

It is found in the cytoplasm. Its subcellular location is the cytosol. The protein localises to the nucleus. The protein resides in the cytoskeleton. It localises to the spindle. It is found in the midbody. It carries out the reaction gamma-L-glutamyl-L-glutamyl-[protein] + H2O = L-glutamyl-[protein] + L-glutamate. The enzyme catalyses (L-glutamyl)(n+1)-gamma-L-glutamyl-L-glutamyl-[protein] + H2O = (L-glutamyl)(n)-gamma-L-glutamyl-L-glutamyl-[protein] + L-glutamate. It catalyses the reaction C-terminal L-alpha-aminoacyl-L-glutamyl-[tubulin] + H2O = C-terminal L-alpha-aminoacyl-[tubulin] + L-glutamate. The catalysed reaction is C-terminal L-alpha-aminoacyl-L-glutamyl-L-glutamyl-[tubulin] + H2O = C-terminal L-alpha-aminoacyl-L-glutamyl-[tubulin] + L-glutamate. In terms of biological role, metallocarboxypeptidase that mediates deglutamylation of tubulin and non-tubulin target proteins. Catalyzes the removal of polyglutamate side chains present on the gamma-carboxyl group of glutamate residues within the C-terminal tail of alpha- and beta-tubulin. Cleaves alpha- and gamma-linked polyglutamate tubulin side-chain, as well as the branching point glutamate. Also catalyzes the removal of alpha-linked glutamate residues from the carboxy-terminus of alpha-tubulin. Mediates deglutamylation of nucleotidyltransferase CGAS, leading to CGAS antiviral defense response activation. This is Cytosolic carboxypeptidase-like protein 5 (Agbl5) from Rattus norvegicus (Rat).